The following is a 267-amino-acid chain: Expansin-B10 (267 aa).

Residues 1–22 (MASSCLLLACVVAAAMVSAVSC) form the signal peptide. N-linked (GlcNAc...) asparagine glycosylation is present at Asn-32. One can recognise an Expansin-like EG45 domain in the interval 61 to 167 (GGACGYKDID…RRVRCKYPGE (107 aa)). Intrachain disulfides connect Cys-64-Cys-92, Cys-95-Cys-162, and Cys-100-Cys-106. The region spanning 181-262 (NYFAVLVKYV…NWKANALYKS (82 aa)) is the Expansin-like CBD domain. An N-linked (GlcNAc...) asparagine glycan is attached at Asn-213.

It belongs to the expansin family. Expansin B subfamily.

Its subcellular location is the secreted. It is found in the cell wall. It localises to the membrane. May cause loosening and extension of plant cell walls by disrupting non-covalent bonding between cellulose microfibrils and matrix glucans. No enzymatic activity has been found. May be required for rapid internodal elongation in deepwater rice during submergence. The chain is Expansin-B10 (EXPB10) from Oryza sativa subsp. japonica (Rice).